Reading from the N-terminus, the 338-residue chain is Heat-inducible transcription repressor HrcA (338 aa).

It belongs to the HrcA family.

Its function is as follows. Negative regulator of class I heat shock genes (grpE-dnaK-dnaJ and groELS operons). Prevents heat-shock induction of these operons. The polypeptide is Heat-inducible transcription repressor HrcA (Polaromonas sp. (strain JS666 / ATCC BAA-500)).